A 439-amino-acid chain; its full sequence is tRNA modification GTPase MnmE (439 aa).

Residues R20, E78, and K116 each contribute to the (6S)-5-formyl-5,6,7,8-tetrahydrofolate site. The region spanning 211 to 364 (GIYVAILGEP…LLSAIQKKVE (154 aa)) is the TrmE-type G domain. Residues 221–226 (NSGKST), 240–246 (SEYAGTT), and 265–268 (DTAG) each bind GTP. Mg(2+) is bound by residues S225 and T246. (6S)-5-formyl-5,6,7,8-tetrahydrofolate is bound at residue K439.

This sequence belongs to the TRAFAC class TrmE-Era-EngA-EngB-Septin-like GTPase superfamily. TrmE GTPase family. As to quaternary structure, homodimer. Heterotetramer of two MnmE and two MnmG subunits. K(+) serves as cofactor.

Its subcellular location is the cytoplasm. Exhibits a very high intrinsic GTPase hydrolysis rate. Involved in the addition of a carboxymethylaminomethyl (cmnm) group at the wobble position (U34) of certain tRNAs, forming tRNA-cmnm(5)s(2)U34. In Ehrlichia ruminantium (strain Gardel), this protein is tRNA modification GTPase MnmE.